A 148-amino-acid chain; its full sequence is UPF0134 protein MPN_204 (148 aa).

Belongs to the UPF0134 family.

The protein is UPF0134 protein MPN_204 of Mycoplasma pneumoniae (strain ATCC 29342 / M129 / Subtype 1) (Mycoplasmoides pneumoniae).